A 69-amino-acid chain; its full sequence is UPF0337 protein YjbJ (69 aa).

The protein belongs to the UPF0337 (CsbD) family.

The sequence is that of UPF0337 protein YjbJ (yjbJ) from Escherichia coli O157:H7.